The chain runs to 484 residues: tRNA sulfurtransferase (484 aa).

Residues 63 to 167 (EAFADRLSCI…RENLYLVVNR (105 aa)) enclose the THUMP domain. Residues 185–186 (LI), lysine 267, glycine 289, and glutamine 298 each bind ATP. Cysteine 346 and cysteine 458 are oxidised to a cystine. Positions 406-484 (VNSNEVIIDV…GYENVKVYRP (79 aa)) constitute a Rhodanese domain. Cysteine 458 (cysteine persulfide intermediate) is an active-site residue.

The protein belongs to the ThiI family.

Its subcellular location is the cytoplasm. It carries out the reaction [ThiI sulfur-carrier protein]-S-sulfanyl-L-cysteine + a uridine in tRNA + 2 reduced [2Fe-2S]-[ferredoxin] + ATP + H(+) = [ThiI sulfur-carrier protein]-L-cysteine + a 4-thiouridine in tRNA + 2 oxidized [2Fe-2S]-[ferredoxin] + AMP + diphosphate. The enzyme catalyses [ThiS sulfur-carrier protein]-C-terminal Gly-Gly-AMP + S-sulfanyl-L-cysteinyl-[cysteine desulfurase] + AH2 = [ThiS sulfur-carrier protein]-C-terminal-Gly-aminoethanethioate + L-cysteinyl-[cysteine desulfurase] + A + AMP + 2 H(+). Its pathway is cofactor biosynthesis; thiamine diphosphate biosynthesis. In terms of biological role, catalyzes the ATP-dependent transfer of a sulfur to tRNA to produce 4-thiouridine in position 8 of tRNAs, which functions as a near-UV photosensor. Also catalyzes the transfer of sulfur to the sulfur carrier protein ThiS, forming ThiS-thiocarboxylate. This is a step in the synthesis of thiazole, in the thiamine biosynthesis pathway. The sulfur is donated as persulfide by IscS. In Shewanella sediminis (strain HAW-EB3), this protein is tRNA sulfurtransferase.